The chain runs to 268 residues: Lectin ESA-2 (268 aa).

A run of 4 repeats spans residues G1–E67, S68–G135, D136–A202, and N203–S268. Residues G1–S268 form a 4 X approximate tandem repeats region.

In terms of assembly, monomer.

In terms of biological role, lectin specific for high mannose N-glycans, recognizes the branched moiety of these glycans. Does not recognize other types of N-glycans or monosaccharides. Agglutinates trypsin-treated sheep and rabbit erythrocytes and untreated sheep erythrocytes. Has mitogenic activity on mouse lymphocytes. Does not require metal ions for activity. The chain is Lectin ESA-2 from Eucheuma serra (Marine red alga).